Here is a 218-residue protein sequence, read N- to C-terminus: Mitochondrial fission factor (218 aa).

Over 1–198 the chain is Cytoplasmic; it reads MAEISRIQYE…ENKERAKREM (198 aa). A Phosphothreonine modification is found at threonine 89. Phosphoserine is present on residues serine 129, serine 131, serine 146, and serine 171. A coiled-coil region spans residues 167-198; sequence VDAASLRRQIIKLNRRLQLLEEENKERAKREM. The helical; Anchor for type IV membrane protein transmembrane segment at 199–216 threads the bilayer; sequence VMYSITVAFWLLNSWLWF. Over 217 to 218 the chain is Mitochondrial intermembrane; the sequence is RR.

It belongs to the Tango11 family. As to quaternary structure, homodimer. Interacts with DNM1L. Interacts with C11orf65/MFI; the interaction inhibits MFF interaction with DNM1L.

It is found in the mitochondrion outer membrane. It localises to the peroxisome. The protein resides in the cytoplasmic vesicle. Its subcellular location is the secretory vesicle. The protein localises to the synaptic vesicle. Functionally, plays a role in mitochondrial and peroxisomal fission. Promotes the recruitment and association of the fission mediator dynamin-related protein 1 (DNM1L) to the mitochondrial surface. May be involved in regulation of synaptic vesicle membrane dynamics by recruitment of DNM1L to clathrin-containing vesicles. The polypeptide is Mitochondrial fission factor (MFF) (Pongo abelii (Sumatran orangutan)).